The following is a 147-amino-acid chain: Protein SOB FIVE-LIKE 2 (147 aa).

The SOFL-A signature appears at 18–23; it reads SGWTMY. The segment at 32–147 is disordered; that stretch reads HHSEVVYEEE…ASRVKVSKTK (116 aa). Positions 37–77 are enriched in acidic residues; sequence VYEEEDDGFSVKEVDDDGDGDEDDDDDDDDDSSNNESDDSM. An SOFL-B motif is present at residues 76-85; it reads SMTSDASSWP. The span at 78–93 shows a compositional bias: polar residues; the sequence is TSDASSWPSTHQPPRS. The segment covering 96 to 106 has biased composition (low complexity); the sequence is NHAAAKNSNAK. Basic and acidic residues predominate over residues 114–131; that stretch reads NRVRDRFSDEGEESELKA.

The protein belongs to the SOFL plant protein family. As to expression, predominantly expressed in the vascular tissues of seedlings, developing leaves, flowers and siliques, but barely detectable in roots and stems.

The protein localises to the cytoplasm. It is found in the nucleus. Functionally, involved in cytokinin-mediated development. Together with SOFL2, triggers the endogenous content of specific bioactive cytokinins derived from the biosynthetic intermediates trans-zeatin riboside monophosphate (tZRMP) and N(6)-(Delta(2)-isopentenyl)adenosine monophosphate (iPRMP) such as N-glucosides trans-zeatin 7-glucoside (tZ7G), cis-zeatin 7-glucoside (cZ7G) and N(6)-(Delta(2)-isopentenyl)adenine 7-glucoside (iP7G). In Arabidopsis thaliana (Mouse-ear cress), this protein is Protein SOB FIVE-LIKE 2.